Here is a 475-residue protein sequence, read N- to C-terminus: Eukaryotic translation initiation factor 3 subunit L (475 aa).

The 195-residue stretch at 257 to 451 (DAIRMFSHIL…DLDYAMQGDL (195 aa)) folds into the PCI domain.

The protein belongs to the eIF-3 subunit L family. As to quaternary structure, component of the eukaryotic translation initiation factor 3 (eIF-3) complex.

Its subcellular location is the cytoplasm. Component of the eukaryotic translation initiation factor 3 (eIF-3) complex, which is involved in protein synthesis of a specialized repertoire of mRNAs and, together with other initiation factors, stimulates binding of mRNA and methionyl-tRNAi to the 40S ribosome. The eIF-3 complex specifically targets and initiates translation of a subset of mRNAs involved in cell proliferation. The protein is Eukaryotic translation initiation factor 3 subunit L of Sclerotinia sclerotiorum (strain ATCC 18683 / 1980 / Ss-1) (White mold).